Here is a 571-residue protein sequence, read N- to C-terminus: Streptolysin O (571 aa).

Residues 1-33 form the signal peptide; sequence MSNKKTFKKYSRVAGLLTVALIIGNLVTANAES. 2 disordered regions span residues 32–56 and 81–108; these read ESNK…ESSE and KEMP…HTEE. Over residues 37-48 the composition is skewed to low complexity; it reads NTASTETTTTNE. The next 4 membrane-spanning stretches (beta stranded) occupy residues 260–273, 280–289, 358–367, and 375–387; these read KSQI…NSKI, IDFKSISKGE, SNDVEAAFSA, and KTNG…LENS. The Conserved undecapeptide motif lies at 529-539; the sequence is ECTGLAWEWWR. Residue threonine 561 is a short sequence motif, cholesterol binding.

The protein belongs to the cholesterol-dependent cytolysin family. As to quaternary structure, homooligomeric pore complex of 35 to 50 subunits; when inserted in the host membrane.

It is found in the secreted. The protein localises to the host cell membrane. A cholesterol-dependent toxin that causes cytolysis by forming pores in cholesterol containing host membranes. After binding to target membranes, the protein undergoes a major conformation change, leading to its insertion in the host membrane and formation of an oligomeric pore complex. Cholesterol is required for binding to host membranes, membrane insertion and pore formation; cholesterol binding is mediated by a Thr-Leu pair in the C-terminus. Can be reversibly inactivated by oxidation. In Streptococcus pyogenes serotype M6 (strain ATCC BAA-946 / MGAS10394), this protein is Streptolysin O (slo).